Here is a 142-residue protein sequence, read N- to C-terminus: Hemoglobin subunit theta-1 (142 aa).

The Globin domain occupies 2 to 142; it reads ALSAEDRALV…VISALVSEYR (141 aa). Residues His59 and His88 each contribute to the heme b site.

This sequence belongs to the globin family.

This Homo sapiens (Human) protein is Hemoglobin subunit theta-1 (HBQ1).